The chain runs to 144 residues: MSTFMAKPHEVERKWYVIDAAGKTLGRVATEAARLLRGKHKPIFTPHVDTGDYVIIINAAKVRLTGNKLQKKQYIRHTGYPGGLRVMNYATLLRTFPERAVEKAVKGMIPHNSLGRKMVKKLKVYRGDSHPHAAQQPQVWEIKD.

The protein belongs to the universal ribosomal protein uL13 family. As to quaternary structure, part of the 50S ribosomal subunit.

Its function is as follows. This protein is one of the early assembly proteins of the 50S ribosomal subunit, although it is not seen to bind rRNA by itself. It is important during the early stages of 50S assembly. The sequence is that of Large ribosomal subunit protein uL13 from Moorella thermoacetica (strain ATCC 39073 / JCM 9320).